A 479-amino-acid chain; its full sequence is GTPase Der (479 aa).

EngA-type G domains lie at 3–167 (FTLA…EAAA) and 191–366 (LQIA…ATWN). Residues 9 to 16 (GRPNVGKS), 56 to 60 (DTAGL), 119 to 122 (NKAE), 197 to 204 (GRPNAGKS), 244 to 248 (DTAGM), and 309 to 312 (NKWD) contribute to the GTP site. Positions 367–453 (TRISTARLNQ…RLWMRSQADD (87 aa)) constitute a KH-like domain. The tract at residues 449 to 479 (SQADDNPYKNRKKSTPSRLNKHVRKGETKKG) is disordered. Residues 457-472 (KNRKKSTPSRLNKHVR) show a composition bias toward basic residues.

Belongs to the TRAFAC class TrmE-Era-EngA-EngB-Septin-like GTPase superfamily. EngA (Der) GTPase family. As to quaternary structure, associates with the 50S ribosomal subunit.

GTPase that plays an essential role in the late steps of ribosome biogenesis. In Jannaschia sp. (strain CCS1), this protein is GTPase Der.